The chain runs to 231 residues: Augmin complex subunit dgt2 (231 aa).

A coiled-coil region spans residues 128 to 199 (QEADLSCDQK…VQTKAELLRG (72 aa)).

As to quaternary structure, component of the augmin complex composed of dgt2, dgt3, dgt4, dgt5, dgt6, msd1, msd5 and wac. The complex interacts directly or indirectly with microtubules and is required for centrosome-independent generation of spindle microtubules. dgt2 interacts directly with wac (via coiled coil). As to expression, in adult females, detected only in the abdomen with no expression in the head or thorax (at protein level).

The protein resides in the cytoplasm. The protein localises to the cytoskeleton. It is found in the spindle. Its subcellular location is the spindle pole. Its function is as follows. As part of the augmin complex, plays a role in centrosome-independent generation of spindle microtubules. The complex is required for mitotic spindle assembly through its involvement in localizing gamma-tubulin to spindle microtubules. dgt2 binds to microtubules in vitro. In Drosophila melanogaster (Fruit fly), this protein is Augmin complex subunit dgt2.